The primary structure comprises 678 residues: Penicillin-binding protein activator LpoA (678 aa).

An N-terminal signal peptide occupies residues methionine 1–glycine 26. A lipid anchor (N-palmitoyl cysteine) is attached at cysteine 27. A lipid anchor (S-diacylglycerol cysteine) is attached at cysteine 27. 3 stretches are compositionally biased toward low complexity: residues alanine 300–glutamine 310, glutamine 330–alanine 340, and threonine 513–phenylalanine 528. Disordered regions lie at residues alanine 300–alanine 340 and alanine 496–phenylalanine 528.

The protein belongs to the LpoA family. Interacts with PBP1a.

The protein localises to the cell outer membrane. Functionally, regulator of peptidoglycan synthesis that is essential for the function of penicillin-binding protein 1A (PBP1a). This Shigella flexneri serotype 5b (strain 8401) protein is Penicillin-binding protein activator LpoA.